The primary structure comprises 697 residues: Polyribonucleotide nucleotidyltransferase (697 aa).

Residues D490 and D496 each coordinate Mg(2+). The region spanning P557–I616 is the KH domain. Residues G626–K694 form the S1 motif domain.

The protein belongs to the polyribonucleotide nucleotidyltransferase family. Mg(2+) is required as a cofactor.

The protein resides in the cytoplasm. The enzyme catalyses RNA(n+1) + phosphate = RNA(n) + a ribonucleoside 5'-diphosphate. Its function is as follows. Involved in mRNA degradation. Catalyzes the phosphorolysis of single-stranded polyribonucleotides processively in the 3'- to 5'-direction. This is Polyribonucleotide nucleotidyltransferase from Staphylococcus saprophyticus subsp. saprophyticus (strain ATCC 15305 / DSM 20229 / NCIMB 8711 / NCTC 7292 / S-41).